Reading from the N-terminus, the 135-residue chain is Retinol-binding protein 5 (135 aa).

Belongs to the calycin superfamily. Fatty-acid binding protein (FABP) family.

It is found in the cytoplasm. Intracellular transport of retinol. In Pongo abelii (Sumatran orangutan), this protein is Retinol-binding protein 5 (RBP5).